The primary structure comprises 137 residues: Fructose-bisphosphate aldolase C (137 aa).

The Schiff-base intermediate with dihydroxyacetone-P role is filled by Lys3.

The protein belongs to the class I fructose-bisphosphate aldolase family. As to quaternary structure, homotetramer.

It carries out the reaction beta-D-fructose 1,6-bisphosphate = D-glyceraldehyde 3-phosphate + dihydroxyacetone phosphate. It functions in the pathway carbohydrate degradation; glycolysis; D-glyceraldehyde 3-phosphate and glycerone phosphate from D-glucose: step 4/4. This is Fructose-bisphosphate aldolase C (ALDOC) from Gallus gallus (Chicken).